A 431-amino-acid chain; its full sequence is 5'-deoxyadenosine deaminase (431 aa).

Zn(2+) contacts are provided by His-65 and His-67. Substrate contacts are provided by Glu-94 and His-185. A Zn(2+)-binding site is contributed by His-212. Residues Glu-215 and Asp-300 each contribute to the substrate site. Zn(2+) is bound at residue Asp-300.

It belongs to the metallo-dependent hydrolases superfamily. MTA/SAH deaminase family. Homotetramer. Zn(2+) is required as a cofactor.

It carries out the reaction 5'-deoxyadenosine + H2O + H(+) = 5'-deoxyinosine + NH4(+). The enzyme catalyses S-adenosyl-L-homocysteine + H2O + H(+) = S-inosyl-L-homocysteine + NH4(+). It catalyses the reaction S-methyl-5'-thioadenosine + H2O + H(+) = S-methyl-5'-thioinosine + NH4(+). The catalysed reaction is adenosine + H2O + H(+) = inosine + NH4(+). The protein operates within amino-acid biosynthesis; S-adenosyl-L-methionine biosynthesis. Catalyzes the deamination of three SAM-derived enzymatic products, namely 5'-deoxyadenosine, S-adenosyl-L-homocysteine, and 5'-methylthioadenosine, to produce the inosine analogs. Can also deaminate adenosine. The preferred substrate for this enzyme is 5'-deoxyadenosine, but all these substrates are efficiently deaminated. Likely functions in a S-adenosyl-L-methionine (SAM) recycling pathway from S-adenosyl-L-homocysteine (SAH) produced from SAM-dependent methylation reactions. May also be involved in the recycling of 5'-deoxyadenosine, whereupon the 5'-deoxyribose moiety of 5'-deoxyinosine is further metabolized to deoxyhexoses used for the biosynthesis of aromatic amino acids in methanogens. The polypeptide is 5'-deoxyadenosine deaminase (Methanopyrus kandleri (strain AV19 / DSM 6324 / JCM 9639 / NBRC 100938)).